The following is a 264-amino-acid chain: Catechol O-methyltransferase B (264 aa).

The signal sequence occupies residues 1-29; it reads MLGVLLCWCLGASVLLYVLYSWLIPAAVQ. N-linked (GlcNAc...) asparagine glycosylation occurs at asparagine 31. S-adenosyl-L-methionine-binding residues include valine 92, serine 122, glutamate 140, and aspartate 191. Aspartate 191 contacts Mg(2+). Substrate is bound at residue lysine 194. 2 residues coordinate Mg(2+): aspartate 219 and asparagine 220. The substrate site is built by asparagine 220 and glutamate 249.

Belongs to the class I-like SAM-binding methyltransferase superfamily. Cation-dependent O-methyltransferase family. Mg(2+) serves as cofactor. Strongly expressed in eye, diencephalon, spinal cord, hindbrain, liver, kidney and telencephalon. Also detected at very low levels in muscle, spleen, anterior gut and heart. In eye, expressed strongly in retina. In brain, expressed in the central part of the telencephalon, the periventricular gray zone of the optic tectum, the periglomerular nucleus, the olfactory bulb, and the region adjacent to the diencephalic ventricle in the hypothalamus. Expressed in gill, with strongest expression in gill filaments nearest the gill arch, and in esophageal epithelium.

Its subcellular location is the secreted. The catalysed reaction is a catechol + S-adenosyl-L-methionine = a guaiacol + S-adenosyl-L-homocysteine + H(+). In terms of biological role, catalyzes the O-methylation, and thereby the inactivation, of catecholamine neurotransmitters and catechol hormones. The sequence is that of Catechol O-methyltransferase B from Danio rerio (Zebrafish).